The primary structure comprises 785 residues: Cadherin-7 (785 aa).

Residues 1-27 (MKLGKVELCHFLQLIALFLCFSGMSQA) form the signal peptide. Residues 28–47 (ELPRSRSKPYFQSGRSRTKR) constitute a propeptide that is removed on maturation. At 28–607 (ELPRSRSKPY…AYVLPAGLST (580 aa)) the chain is on the extracellular side. 5 Cadherin domains span residues 49 to 153 (WVWN…EPKF), 154 to 262 (LDGP…PPRF), 263 to 377 (PRRS…PPVF), 378 to 482 (SSPL…APEF), and 482 to 599 (FAMD…AEAY). 2 N-linked (GlcNAc...) asparagine glycosylation sites follow: Asn-449 and Asn-530. The helical transmembrane segment at 608-628 (GALIAILACVLTLLVLILLIV) threads the bilayer. The Cytoplasmic portion of the chain corresponds to 629-785 (TMRRRKKEPL…YGNGQESLYS (157 aa)).

The protein resides in the cell membrane. Functionally, cadherins are calcium-dependent cell adhesion proteins. They preferentially interact with themselves in a homophilic manner in connecting cells; cadherins may thus contribute to the sorting of heterogeneous cell types. The protein is Cadherin-7 (Cdh7) of Mus musculus (Mouse).